The primary structure comprises 563 residues: Dihydroxy-acid dehydratase (563 aa).

A [2Fe-2S] cluster-binding site is contributed by cysteine 50. Residue aspartate 82 participates in Mg(2+) binding. Cysteine 123 is a [2Fe-2S] cluster binding site. Positions 124 and 125 each coordinate Mg(2+). Lysine 125 is subject to N6-carboxylysine. Cysteine 195 is a [2Fe-2S] cluster binding site. Glutamate 447 serves as a coordination point for Mg(2+). The Proton acceptor role is filled by serine 473.

It belongs to the IlvD/Edd family. As to quaternary structure, homodimer. [2Fe-2S] cluster is required as a cofactor. Mg(2+) serves as cofactor.

It catalyses the reaction (2R)-2,3-dihydroxy-3-methylbutanoate = 3-methyl-2-oxobutanoate + H2O. The catalysed reaction is (2R,3R)-2,3-dihydroxy-3-methylpentanoate = (S)-3-methyl-2-oxopentanoate + H2O. Its pathway is amino-acid biosynthesis; L-isoleucine biosynthesis; L-isoleucine from 2-oxobutanoate: step 3/4. It functions in the pathway amino-acid biosynthesis; L-valine biosynthesis; L-valine from pyruvate: step 3/4. Functions in the biosynthesis of branched-chain amino acids. Catalyzes the dehydration of (2R,3R)-2,3-dihydroxy-3-methylpentanoate (2,3-dihydroxy-3-methylvalerate) into 2-oxo-3-methylpentanoate (2-oxo-3-methylvalerate) and of (2R)-2,3-dihydroxy-3-methylbutanoate (2,3-dihydroxyisovalerate) into 2-oxo-3-methylbutanoate (2-oxoisovalerate), the penultimate precursor to L-isoleucine and L-valine, respectively. In Nostoc sp. (strain PCC 7120 / SAG 25.82 / UTEX 2576), this protein is Dihydroxy-acid dehydratase.